Reading from the N-terminus, the 356-residue chain is Chorismate synthase (356 aa).

Arg-48 and Arg-54 together coordinate NADP(+). FMN contacts are provided by residues 125 to 127 (RSS), 237 to 238 (NA), Gly-282, 297 to 301 (KPTSS), and Arg-323.

The protein belongs to the chorismate synthase family. As to quaternary structure, homotetramer. FMNH2 is required as a cofactor.

The catalysed reaction is 5-O-(1-carboxyvinyl)-3-phosphoshikimate = chorismate + phosphate. It participates in metabolic intermediate biosynthesis; chorismate biosynthesis; chorismate from D-erythrose 4-phosphate and phosphoenolpyruvate: step 7/7. In terms of biological role, catalyzes the anti-1,4-elimination of the C-3 phosphate and the C-6 proR hydrogen from 5-enolpyruvylshikimate-3-phosphate (EPSP) to yield chorismate, which is the branch point compound that serves as the starting substrate for the three terminal pathways of aromatic amino acid biosynthesis. This reaction introduces a second double bond into the aromatic ring system. The chain is Chorismate synthase from Rhizorhabdus wittichii (strain DSM 6014 / CCUG 31198 / JCM 15750 / NBRC 105917 / EY 4224 / RW1) (Sphingomonas wittichii).